We begin with the raw amino-acid sequence, 355 residues long: Probable dual-specificity RNA methyltransferase RlmN (355 aa).

Glutamate 89 (proton acceptor) is an active-site residue. The region spanning 95-322 (YENRKTVCLS…KRLGVPTSIR (228 aa)) is the Radical SAM core domain. A disulfide bridge connects residues cysteine 102 and cysteine 333. [4Fe-4S] cluster contacts are provided by cysteine 109, cysteine 113, and cysteine 116. Residues 159 to 160 (GE), serine 191, 214 to 216 (SLH), and asparagine 290 each bind S-adenosyl-L-methionine. Cysteine 333 acts as the S-methylcysteine intermediate in catalysis.

The protein belongs to the radical SAM superfamily. RlmN family. The cofactor is [4Fe-4S] cluster.

It is found in the cytoplasm. The enzyme catalyses adenosine(2503) in 23S rRNA + 2 reduced [2Fe-2S]-[ferredoxin] + 2 S-adenosyl-L-methionine = 2-methyladenosine(2503) in 23S rRNA + 5'-deoxyadenosine + L-methionine + 2 oxidized [2Fe-2S]-[ferredoxin] + S-adenosyl-L-homocysteine. It catalyses the reaction adenosine(37) in tRNA + 2 reduced [2Fe-2S]-[ferredoxin] + 2 S-adenosyl-L-methionine = 2-methyladenosine(37) in tRNA + 5'-deoxyadenosine + L-methionine + 2 oxidized [2Fe-2S]-[ferredoxin] + S-adenosyl-L-homocysteine. Its function is as follows. Specifically methylates position 2 of adenine 2503 in 23S rRNA and position 2 of adenine 37 in tRNAs. This Thermus thermophilus (strain ATCC BAA-163 / DSM 7039 / HB27) protein is Probable dual-specificity RNA methyltransferase RlmN.